Consider the following 191-residue polypeptide: 7-methyl-GTP pyrophosphatase (191 aa).

The active-site Proton acceptor is D70.

It belongs to the Maf family. YceF subfamily. The cofactor is a divalent metal cation.

It localises to the cytoplasm. The catalysed reaction is N(7)-methyl-GTP + H2O = N(7)-methyl-GMP + diphosphate + H(+). Nucleoside triphosphate pyrophosphatase that hydrolyzes 7-methyl-GTP (m(7)GTP). May have a dual role in cell division arrest and in preventing the incorporation of modified nucleotides into cellular nucleic acids. This is 7-methyl-GTP pyrophosphatase from Xanthomonas oryzae pv. oryzae (strain KACC10331 / KXO85).